A 432-amino-acid polypeptide reads, in one-letter code: Adenylosuccinate synthetase (432 aa).

Residues 13–19 (GDEGKGK) and 41–43 (GHT) each bind GTP. The active-site Proton acceptor is the Asp-14. Residues Asp-14 and Gly-41 each coordinate Mg(2+). IMP contacts are provided by residues 14 to 17 (DEGK), 39 to 42 (NAGH), Thr-130, Arg-144, Gln-225, Thr-240, and Arg-304. His-42 (proton donor) is an active-site residue. Substrate is bound at residue 300-306 (ATTGRRR). Residues Arg-306, 332–334 (KLD), and 415–417 (STG) each bind GTP.

It belongs to the adenylosuccinate synthetase family. In terms of assembly, homodimer. Mg(2+) is required as a cofactor.

It is found in the cytoplasm. The enzyme catalyses IMP + L-aspartate + GTP = N(6)-(1,2-dicarboxyethyl)-AMP + GDP + phosphate + 2 H(+). Its pathway is purine metabolism; AMP biosynthesis via de novo pathway; AMP from IMP: step 1/2. In terms of biological role, plays an important role in the de novo pathway of purine nucleotide biosynthesis. Catalyzes the first committed step in the biosynthesis of AMP from IMP. The sequence is that of Adenylosuccinate synthetase from Salmonella heidelberg (strain SL476).